Reading from the N-terminus, the 505-residue chain is Ribosomal RNA small subunit methyltransferase F (505 aa).

S-adenosyl-L-methionine is bound by residues 123-129, Glu-147, Asp-174, and Asp-192; that span reads ASAPGSK. Cys-245 acts as the Nucleophile in catalysis. Residues 409–437 form a disordered region; sequence GTNANNNSNTNPNNNANTNPNNNSNTNPR. A compositionally biased stretch (low complexity) spans 410 to 435; it reads TNANNNSNTNPNNNANTNPNNNSNTN.

This sequence belongs to the class I-like SAM-binding methyltransferase superfamily. RsmB/NOP family.

The protein localises to the cytoplasm. It carries out the reaction cytidine(1407) in 16S rRNA + S-adenosyl-L-methionine = 5-methylcytidine(1407) in 16S rRNA + S-adenosyl-L-homocysteine + H(+). In terms of biological role, specifically methylates the cytosine at position 1407 (m5C1407) of 16S rRNA. The protein is Ribosomal RNA small subunit methyltransferase F of Shewanella denitrificans (strain OS217 / ATCC BAA-1090 / DSM 15013).